Consider the following 382-residue polypeptide: Ribosomal RNA large subunit methyltransferase F (382 aa).

2 disordered regions span residues 1–53 (MTKP…LHRD) and 269–288 (NRAS…KSQL). Basic residues predominate over residues 8-24 (ASRKPVTKSGRNSKRSR). Basic and acidic residues predominate over residues 269–286 (NRASKGHKLEPKAPKDKS).

The protein belongs to the methyltransferase superfamily. METTL16/RlmF family.

The protein localises to the cytoplasm. The enzyme catalyses adenosine(1618) in 23S rRNA + S-adenosyl-L-methionine = N(6)-methyladenosine(1618) in 23S rRNA + S-adenosyl-L-homocysteine + H(+). Functionally, specifically methylates the adenine in position 1618 of 23S rRNA. The sequence is that of Ribosomal RNA large subunit methyltransferase F from Shewanella woodyi (strain ATCC 51908 / MS32).